The following is a 285-amino-acid chain: Urease accessory protein UreD (285 aa).

The protein belongs to the UreD family. As to quaternary structure, ureD, UreF and UreG form a complex that acts as a GTP-hydrolysis-dependent molecular chaperone, activating the urease apoprotein by helping to assemble the nickel containing metallocenter of UreC. The UreE protein probably delivers the nickel.

The protein resides in the cytoplasm. In terms of biological role, required for maturation of urease via the functional incorporation of the urease nickel metallocenter. This Cytophaga hutchinsonii (strain ATCC 33406 / DSM 1761 / CIP 103989 / NBRC 15051 / NCIMB 9469 / D465) protein is Urease accessory protein UreD.